A 611-amino-acid polypeptide reads, in one-letter code: Putative type II restriction enzyme HgiDII (611 aa).

The segment covering 355–364 has biased composition (basic and acidic residues); the sequence is YPSNPKKEEV. A disordered region spans residues 355–434; sequence YPSNPKKEEV…PEPSPPPKQE (80 aa). A compositionally biased stretch (low complexity) spans 381-409; it reads TNASSDSSTATENASSDSSTATENASSET. Repeat copies occupy residues 382–392 and 393–403. Residues 382–403 are 2.5 X 11 AA tandem repeats; the sequence is NASSDSSTATENASSDSSTATE. The 3; truncated repeat unit spans residues 404 to 409; it reads NASSET. The segment covering 410–425 has biased composition (acidic residues); the sequence is NDGEVEDNSFFDDDIP.

The enzyme catalyses Endonucleolytic cleavage of DNA to give specific double-stranded fragments with terminal 5'-phosphates.. Functionally, according to REBASE this is a P subtype restriction enzyme that recognizes the double-stranded sequence 5'-GTCGAC-3' and cleaves after G-1. No restriction activity was detected upon overexpressing this protein in E.coli. This chain is Putative type II restriction enzyme HgiDII, found in Herpetosiphon aurantiacus (Herpetosiphon giganteus).